The chain runs to 363 residues: Aminomethyltransferase (363 aa).

This sequence belongs to the GcvT family. The glycine cleavage system is composed of four proteins: P, T, L and H.

The enzyme catalyses N(6)-[(R)-S(8)-aminomethyldihydrolipoyl]-L-lysyl-[protein] + (6S)-5,6,7,8-tetrahydrofolate = N(6)-[(R)-dihydrolipoyl]-L-lysyl-[protein] + (6R)-5,10-methylene-5,6,7,8-tetrahydrofolate + NH4(+). In terms of biological role, the glycine cleavage system catalyzes the degradation of glycine. This Teredinibacter turnerae (strain ATCC 39867 / T7901) protein is Aminomethyltransferase.